The following is a 682-amino-acid chain: Actin-binding LIM protein 3 (682 aa).

Position 1 is an N-acetylmethionine (Met1). LIM zinc-binding domains follow at residues 21 to 80, 80 to 140, 149 to 208, and 208 to 268; these read IQCY…LYGT, TRCD…MTSS, SHCA…QFGI, and IKCE…ARAE. 8 positions are modified to phosphoserine: Ser277, Ser280, Ser282, Ser286, Ser290, Ser337, Ser372, and Ser373. Disordered stretches follow at residues 372–426 and 440–475; these read SSPG…SYQA and YRKPPIYKRHGDLSTATKSKTSEDISQASKYSPAYS. Tyr376 is subject to Phosphotyrosine. Ser379 and Ser388 each carry phosphoserine. Composition is skewed to polar residues over residues 380–393, 405–425, and 453–466; these read PTYSRQGMSPTFSR, GRSSPYHSQLDVRSSTPTSYQ, and STATKSKTSEDISQ. Phosphoserine is present on residues Ser492, Ser502, and Ser503. Thr542 carries the phosphothreonine modification. Phosphoserine is present on residues Ser566, Ser575, and Ser606. The 69-residue stretch at 614–682 folds into the HP domain; the sequence is MREYKIYPYE…NELKKQARLF (69 aa). Arg630 carries the post-translational modification Omega-N-methylarginine.

In terms of assembly, directly interacts with F-actin and ABRA. Expressed in heart, brain, lung and liver. In the brain, highly expressed in the olfactory bulb. In the hippocampus, expressed selectively in the CA2 and CA3 fields. In the cerebellum, expressed in internal granular cells.

The protein resides in the cytoplasm. May act as scaffold protein. May stimulate ABRA activity and ABRA-dependent SRF transcriptional activity. The sequence is that of Actin-binding LIM protein 3 (Ablim3) from Mus musculus (Mouse).